A 264-amino-acid polypeptide reads, in one-letter code: Transmembrane protein 41A (264 aa).

The first 17 residues, 1-17, serve as a signal peptide directing secretion; that stretch reads MRPLLGLLLVFAGCTFA. The next 5 helical transmembrane spans lie at 67 to 87, 100 to 122, 153 to 173, 175 to 195, and 219 to 239; these read AYVF…AIPG, GPWL…CYLL, LFFF…FLNL, APIL…GLIP, and WDTV…GTLI. Positions 96-207 are VTT domain; it reads GALFGPWLGL…FICVQTGSIL (112 aa). Residue Asn250 is glycosylated (N-linked (GlcNAc...) asparagine).

It belongs to the TMEM41 family.

The protein resides in the membrane. The protein is Transmembrane protein 41A (TMEM41A) of Homo sapiens (Human).